We begin with the raw amino-acid sequence, 211 residues long: Large ribosomal subunit protein uL4 (211 aa).

Residues 40–85 are disordered; it reads QQAHSRQGTASTLTRSEVRGGGRKPYKQKGTGRARQGSIRTPLRPG. Positions 41 to 54 are enriched in polar residues; it reads QAHSRQGTASTLTR. The span at 60–71 shows a compositional bias: basic residues; sequence GGRKPYKQKGTG.

This sequence belongs to the universal ribosomal protein uL4 family. As to quaternary structure, part of the 50S ribosomal subunit.

Functionally, one of the primary rRNA binding proteins, this protein initially binds near the 5'-end of the 23S rRNA. It is important during the early stages of 50S assembly. It makes multiple contacts with different domains of the 23S rRNA in the assembled 50S subunit and ribosome. Its function is as follows. Forms part of the polypeptide exit tunnel. This chain is Large ribosomal subunit protein uL4, found in Prochlorococcus marinus (strain NATL2A).